A 622-amino-acid polypeptide reads, in one-letter code: Ferredoxin-fold anticodon-binding domain-containing protein 1 homolog (622 aa).

The FDX-ACB domain occupies 529–622; the sequence is LYPPCYVHDV…IQRQLHVSPR (94 aa).

The polypeptide is Ferredoxin-fold anticodon-binding domain-containing protein 1 homolog (Fdxacb1) (Mus musculus (Mouse)).